The following is a 238-amino-acid chain: Probable transcriptional regulatory protein TC_0742 (238 aa).

The disordered stretch occupies residues 1–21 (MAGHSKWANTKHRKERADHKK). The span at 9–21 (NTKHRKERADHKK) shows a compositional bias: basic residues.

Belongs to the TACO1 family.

It localises to the cytoplasm. This Chlamydia muridarum (strain MoPn / Nigg) protein is Probable transcriptional regulatory protein TC_0742.